The primary structure comprises 59 residues: Preprotein translocase subunit SecG (59 aa).

Over 1-33 (MARRESSGGSGGLMSSAGLMRYFEAEESAIKID) the chain is Cytoplasmic. A helical transmembrane segment spans residues 34-55 (PKTVIIAAVASGAFIWILNFTY). Residues 56–59 (GRFW) are Extracellular-facing.

This sequence belongs to the SEC61-beta family. As to quaternary structure, component of the protein translocase complex. Heterotrimer consisting of alpha (SecY), beta (SecG) and gamma (SecE) subunits. Can form oligomers of the heterotrimer.

It localises to the cell membrane. Functionally, involved in protein export. The function of the beta subunit is unknown, but it may be involved in stabilization of the trimeric complex. This is Preprotein translocase subunit SecG from Methanocella arvoryzae (strain DSM 22066 / NBRC 105507 / MRE50).